Consider the following 130-residue polypeptide: Small ribosomal subunit protein uS11 (130 aa).

The protein belongs to the universal ribosomal protein uS11 family. As to quaternary structure, part of the 30S ribosomal subunit. Interacts with proteins S7 and S18. Binds to IF-3.

Located on the platform of the 30S subunit, it bridges several disparate RNA helices of the 16S rRNA. Forms part of the Shine-Dalgarno cleft in the 70S ribosome. The sequence is that of Small ribosomal subunit protein uS11 from Gloeobacter violaceus (strain ATCC 29082 / PCC 7421).